Here is a 125-residue protein sequence, read N- to C-terminus: Small ribosomal subunit protein uS13 (125 aa).

The protein belongs to the universal ribosomal protein uS13 family. In terms of assembly, part of the 30S ribosomal subunit. Forms a loose heterodimer with protein S19. Forms two bridges to the 50S subunit in the 70S ribosome.

Located at the top of the head of the 30S subunit, it contacts several helices of the 16S rRNA. In the 70S ribosome it contacts the 23S rRNA (bridge B1a) and protein L5 of the 50S subunit (bridge B1b), connecting the 2 subunits; these bridges are implicated in subunit movement. Contacts the tRNAs in the A and P-sites. The sequence is that of Small ribosomal subunit protein uS13 from Rickettsia massiliae (strain Mtu5).